A 300-amino-acid polypeptide reads, in one-letter code: Tyrosine recombinase XerC (300 aa).

In terms of domain architecture, Core-binding (CB) spans 2 to 88 (IQEGKLEQQF…SLRSFYTFLL (87 aa)). The Tyr recombinase domain occupies 109 to 294 (RLPKFFYSEE…TKEHLKSTYM (186 aa)). Catalysis depends on residues R150, K174, H246, R249, and H272. The active-site O-(3'-phospho-DNA)-tyrosine intermediate is Y281.

It belongs to the 'phage' integrase family. XerC subfamily. In terms of assembly, forms a cyclic heterotetrameric complex composed of two molecules of XerC and two molecules of XerD.

It is found in the cytoplasm. In terms of biological role, site-specific tyrosine recombinase, which acts by catalyzing the cutting and rejoining of the recombining DNA molecules. The XerC-XerD complex is essential to convert dimers of the bacterial chromosome into monomers to permit their segregation at cell division. It also contributes to the segregational stability of plasmids. The protein is Tyrosine recombinase XerC of Listeria monocytogenes serovar 1/2a (strain ATCC BAA-679 / EGD-e).